The primary structure comprises 100 residues: Protein alpha-2 (100 aa).

The polypeptide is Protein alpha-2 (Bos taurus (Bovine)).